A 967-amino-acid chain; its full sequence is Probable helicase DDB_G0274399 (967 aa).

The tract at residues E161–T192 is disordered. G357–T364 lines the ATP pocket. Disordered stretches follow at residues S529–S553 and Q892–R967. The stretch at N890–A949 forms a coiled coil. Positions R900 to Q909 are enriched in basic residues. The segment covering N928–E937 has biased composition (low complexity).

It belongs to the DNA2/NAM7 helicase family.

It localises to the nucleus. This Dictyostelium discoideum (Social amoeba) protein is Probable helicase DDB_G0274399.